The sequence spans 169 residues: Cuticle protein 21 (169 aa).

6 repeat units span residues 21–24 (AAPV), 27–30 (AAPA), 33–36 (AAPV), 39–42 (AAPA), 47–50 (AAPV), and 53–56 (AAPA). The Chitin-binding type R&amp;R domain maps to 65-135 (NPQYSYAYNV…KEAGAHPAPV (71 aa)). Tandem repeats lie at residues 140–143 (AAPV), 146–149 (AAPA), and 160–163 (AAPA).

Its function is as follows. Component of the cuticle of migratory locust which contains more than 100 different structural proteins. The chain is Cuticle protein 21 (ACP21) from Locusta migratoria (Migratory locust).